The chain runs to 504 residues: Cytochrome P450 7A1 (504 aa).

The chain crosses the membrane as a helical span at residues 4 to 24; the sequence is TSLIWGIAIAACCCLWLILGI. Cys-444 provides a ligand contact to heme.

This sequence belongs to the cytochrome P450 family. It depends on heme as a cofactor. As to expression, detected in liver.

It localises to the endoplasmic reticulum membrane. It is found in the microsome membrane. The catalysed reaction is cholesterol + reduced [NADPH--hemoprotein reductase] + O2 = 7alpha-hydroxycholesterol + oxidized [NADPH--hemoprotein reductase] + H2O + H(+). It carries out the reaction 4beta-hydroxycholesterol + reduced [NADPH--hemoprotein reductase] + O2 = 4beta,7alpha-dihydroxycholesterol + oxidized [NADPH--hemoprotein reductase] + H2O + H(+). The enzyme catalyses lathosterol + reduced [NADPH--hemoprotein reductase] + O2 = 7alpha,8alpha-epoxy-5alpha-cholestan-3beta-ol + oxidized [NADPH--hemoprotein reductase] + H2O + H(+). It catalyses the reaction lathosterol + reduced [NADPH--hemoprotein reductase] + O2 = 5alpha-cholestan-7-oxo-3beta-ol + oxidized [NADPH--hemoprotein reductase] + H2O + H(+). The catalysed reaction is 7-dehydrocholesterol + reduced [NADPH--hemoprotein reductase] + O2 = 7-oxocholesterol + oxidized [NADPH--hemoprotein reductase] + H2O + H(+). It carries out the reaction (24S)-hydroxycholesterol + reduced [NADPH--hemoprotein reductase] + O2 = (24S)-7alpha-dihydroxycholesterol + oxidized [NADPH--hemoprotein reductase] + H2O + H(+). The enzyme catalyses (24R)-hydroxycholesterol + reduced [NADPH--hemoprotein reductase] + O2 = (24R)-7alpha-dihydroxycholesterol + oxidized [NADPH--hemoprotein reductase] + H2O + H(+). Its pathway is lipid metabolism; bile acid biosynthesis. It participates in steroid metabolism; cholesterol degradation. A cytochrome P450 monooxygenase involved in the metabolism of endogenous cholesterol and its oxygenated derivatives (oxysterols). Mechanistically, uses molecular oxygen inserting one oxygen atom into a substrate, and reducing the second into a water molecule, with two electrons provided by NADPH via cytochrome P450 reductase (CPR; NADPH-ferrihemoprotein reductase). Functions as a critical regulatory enzyme of bile acid biosynthesis and cholesterol homeostasis. Catalyzes the hydroxylation of carbon hydrogen bond at 7-alpha position of cholesterol, a rate-limiting step in cholesterol catabolism and bile acid biosynthesis. 7-alpha hydroxylates several oxysterols, including 4beta-hydroxycholesterol and 24-hydroxycholesterol. Catalyzes the oxidation of the 7,8 double bond of 7-dehydrocholesterol and lathosterol with direct and predominant formation of the 7-keto derivatives. The sequence is that of Cytochrome P450 7A1 from Homo sapiens (Human).